The following is a 407-amino-acid chain: Ameloblastin (407 aa).

An N-terminal signal peptide occupies residues 1 to 26 (MSASKIPLFKMKGLILFLSLVKMSLA). Proline 42 is subject to Hydroxyproline. A Phosphoserine modification is found at serine 48. Disordered regions lie at residues 124–143 (GVQVTPQKPGPQPPMHPGQL) and 259–304 (QNSP…ENPA).

It belongs to the ameloblastin family. In terms of tissue distribution, ameloblast-specific.

Its subcellular location is the secreted. The protein localises to the extracellular space. It localises to the extracellular matrix. Its function is as follows. Involved in the mineralization and structural organization of enamel. The protein is Ameloblastin (Ambn) of Mus musculus (Mouse).